We begin with the raw amino-acid sequence, 374 residues long: Alanine racemase (374 aa).

The active-site Proton acceptor; specific for D-alanine is Lys-34. At Lys-34 the chain carries N6-(pyridoxal phosphate)lysine. Residue Arg-147 participates in substrate binding. Tyr-271 functions as the Proton acceptor; specific for L-alanine in the catalytic mechanism. Met-319 contributes to the substrate binding site.

Belongs to the alanine racemase family. Pyridoxal 5'-phosphate serves as cofactor.

It catalyses the reaction L-alanine = D-alanine. Its pathway is amino-acid biosynthesis; D-alanine biosynthesis; D-alanine from L-alanine: step 1/1. Catalyzes the interconversion of L-alanine and D-alanine. May also act on other amino acids. The protein is Alanine racemase (alr) of Haemophilus ducreyi (strain 35000HP / ATCC 700724).